The following is a 387-amino-acid chain: GDSL esterase/lipase At2g23540 (387 aa).

Positions 1–32 (MATRASTSSRVSPAFTFLVIFFLLSLTASVEA) are cleaved as a signal peptide. The Nucleophile role is filled by Ser55. N-linked (GlcNAc...) asparagine glycosylation is found at Asn139 and Asn159. Residues Asp352 and His355 contribute to the active site. The N-linked (GlcNAc...) asparagine glycan is linked to Asn380.

This sequence belongs to the 'GDSL' lipolytic enzyme family.

The protein resides in the secreted. This is GDSL esterase/lipase At2g23540 from Arabidopsis thaliana (Mouse-ear cress).